A 229-amino-acid polypeptide reads, in one-letter code: Large ribosomal subunit protein uL1 (229 aa).

Belongs to the universal ribosomal protein uL1 family. In terms of assembly, part of the 50S ribosomal subunit.

Binds directly to 23S rRNA. The L1 stalk is quite mobile in the ribosome, and is involved in E site tRNA release. In terms of biological role, protein L1 is also a translational repressor protein, it controls the translation of the L11 operon by binding to its mRNA. This is Large ribosomal subunit protein uL1 from Bifidobacterium animalis subsp. lactis (strain AD011).